The following is a 733-amino-acid chain: LMBR1 domain-containing protein 2 homolog A (733 aa).

The next 5 helical transmembrane spans lie at 1–21 (MIVI…KILH), 33–53 (VYIS…LVPI), 125–145 (FYFG…SFVL), 163–183 (AYLY…LLAV), and 191–211 (MVGF…IILM). A coiled-coil region spans residues 232-266 (LKHLQFKAVELLNSKKKANEELIATMKVIRRIQEK). Helical transmembrane passes span 386–406 (AAIV…ALAF), 423–443 (VSNI…ALTC), 468–488 (SIIF…YNFI), and 513–533 (VAPF…VIVC). Disordered regions lie at residues 581-641 (NNIK…TSSA), 649-668 (LKKS…PYEQ), and 674-696 (ESND…TYNA). Residues 596–619 (DSTSNNPKQIFKSGSTTISKQSPP) are compositionally biased toward polar residues. 2 stretches are compositionally biased toward low complexity: residues 620 to 640 (NLNV…NTSS) and 654 to 664 (NNNNNNNNNNN). The span at 674-685 (ESNDFDDDDDIE) shows a compositional bias: acidic residues.

This sequence belongs to the LIMR family.

It is found in the membrane. This is LMBR1 domain-containing protein 2 homolog A from Dictyostelium discoideum (Social amoeba).